The chain runs to 371 residues: D-alanine--D-alanine ligase (371 aa).

Residues Lys154–Asp361 form the ATP-grasp domain. Residue Arg182 to Glu237 coordinates ATP. Residues Asp316, Glu328, and Asn330 each contribute to the Mg(2+) site.

Belongs to the D-alanine--D-alanine ligase family. Mg(2+) serves as cofactor. It depends on Mn(2+) as a cofactor.

The protein localises to the cytoplasm. The catalysed reaction is 2 D-alanine + ATP = D-alanyl-D-alanine + ADP + phosphate + H(+). The protein operates within cell wall biogenesis; peptidoglycan biosynthesis. Functionally, cell wall formation. The sequence is that of D-alanine--D-alanine ligase from Mycobacterium sp. (strain JLS).